Consider the following 215-residue polypeptide: Protein GET1 (215 aa).

Residues 1–4 (MPSL) lie on the Lumenal side of the membrane. A helical membrane pass occupies residues 5-24 (LILIFTIEVAVELINTIGAA). The Cytoplasmic portion of the chain corresponds to 25–110 (TINNLLWRIF…NFDKYITGIR (86 aa)). Residues 72-104 (AKWAKLRRQHDKLLEQLEKKKAALDSTKGNFDK) adopt a coiled-coil conformation. A helical transmembrane segment spans residues 111 to 131 (WVGTQGLRYFLPFWYAKVPMF). Topologically, residues 132-155 (WLPYGWFPYYAEWLVSFPRAPMGS) are lumenal. The chain crosses the membrane as a helical span at residues 156–172 (VSIASWQLACTGFVVLI). Residues 173–215 (KDAITALVVFVMGMRQSNVKQAVPVKAVSGEKASDEKEGKKEL) are Cytoplasmic-facing.

The protein belongs to the WRB/GET1 family. In terms of assembly, interacts with GET3.

The protein localises to the endoplasmic reticulum membrane. Functionally, required for the post-translational delivery of tail-anchored (TA) proteins to the endoplasmic reticulum. Acts as a membrane receptor for soluble GET3, which recognizes and selectively binds the transmembrane domain of TA proteins in the cytosol. The sequence is that of Protein GET1 from Pyricularia oryzae (strain 70-15 / ATCC MYA-4617 / FGSC 8958) (Rice blast fungus).